The chain runs to 128 residues: UPF0102 protein GSU0650 (128 aa).

Belongs to the UPF0102 family.

The polypeptide is UPF0102 protein GSU0650 (Geobacter sulfurreducens (strain ATCC 51573 / DSM 12127 / PCA)).